Here is a 397-residue protein sequence, read N- to C-terminus: Acetyl-CoA acetyltransferase, cytosolic (397 aa).

M1 is modified (N-acetylmethionine). C92 serves as the catalytic Acyl-thioester intermediate. Position 200 is an N6-acetyllysine (K200). CoA contacts are provided by R223 and S226. N6-acetyllysine occurs at positions 233 and 235. Position 252 (S252) interacts with CoA. The active-site Proton donor/acceptor is the C383.

The protein belongs to the thiolase-like superfamily. Thiolase family. In terms of assembly, homotetramer.

It is found in the cytoplasm. The protein localises to the cytosol. The catalysed reaction is 2 acetyl-CoA = acetoacetyl-CoA + CoA. It participates in lipid metabolism; fatty acid metabolism. Functionally, involved in the biosynthetic pathway of cholesterol. The polypeptide is Acetyl-CoA acetyltransferase, cytosolic (Acat2) (Rattus norvegicus (Rat)).